The chain runs to 783 residues: Endonuclease MutS2 (783 aa).

333–340 contacts ATP; sequence GPNTGGKT. The Smr domain occupies 708–783; it reads IDLRGKNIEE…GLGATFIYLK (76 aa).

Belongs to the DNA mismatch repair MutS family. MutS2 subfamily. In terms of assembly, homodimer. Binds to stalled ribosomes, contacting rRNA.

In terms of biological role, endonuclease that is involved in the suppression of homologous recombination and thus may have a key role in the control of bacterial genetic diversity. Its function is as follows. Acts as a ribosome collision sensor, splitting the ribosome into its 2 subunits. Detects stalled/collided 70S ribosomes which it binds and splits by an ATP-hydrolysis driven conformational change. Acts upstream of the ribosome quality control system (RQC), a ribosome-associated complex that mediates the extraction of incompletely synthesized nascent chains from stalled ribosomes and their subsequent degradation. Probably generates substrates for RQC. The polypeptide is Endonuclease MutS2 (Finegoldia magna (strain ATCC 29328 / DSM 20472 / WAL 2508) (Peptostreptococcus magnus)).